The primary structure comprises 160 residues: Phosphopantetheine adenylyltransferase (160 aa).

Threonine 9 provides a ligand contact to substrate. ATP-binding positions include 9 to 10 (TF) and histidine 17. The substrate site is built by lysine 41, leucine 73, and arginine 87. ATP-binding positions include 88–90 (GLR), glutamate 98, and 123–129 (YMFISAS).

The protein belongs to the bacterial CoaD family. Homohexamer. Requires Mg(2+) as cofactor.

It localises to the cytoplasm. The catalysed reaction is (R)-4'-phosphopantetheine + ATP + H(+) = 3'-dephospho-CoA + diphosphate. Its pathway is cofactor biosynthesis; coenzyme A biosynthesis; CoA from (R)-pantothenate: step 4/5. Functionally, reversibly transfers an adenylyl group from ATP to 4'-phosphopantetheine, yielding dephospho-CoA (dPCoA) and pyrophosphate. The polypeptide is Phosphopantetheine adenylyltransferase (Thiobacillus denitrificans (strain ATCC 25259 / T1)).